Consider the following 232-residue polypeptide: Ubiquitin-conjugating enzyme E2-24 kDa (232 aa).

The span at 1–37 (MSSTPAAGSAAEVATSSATSNAPSAPSTTASNVSNTS) shows a compositional bias: low complexity. The interval 1-87 (MSSTPAAGSA…PRISRALGTS (87 aa)) is disordered. Residues 58 to 67 (GASGSNAGGG) are compositionally biased toward gly residues. The region spanning 86–232 (TSAKRIQKEL…ARLWTKRYAT (147 aa)) is the UBC core domain. Catalysis depends on Cys170, which acts as the Glycyl thioester intermediate.

It belongs to the ubiquitin-conjugating enzyme family.

It catalyses the reaction S-ubiquitinyl-[E1 ubiquitin-activating enzyme]-L-cysteine + [E2 ubiquitin-conjugating enzyme]-L-cysteine = [E1 ubiquitin-activating enzyme]-L-cysteine + S-ubiquitinyl-[E2 ubiquitin-conjugating enzyme]-L-cysteine.. It participates in protein modification; protein ubiquitination. In terms of biological role, catalyzes the covalent attachment of ubiquitin to other proteins. This Drosophila melanogaster (Fruit fly) protein is Ubiquitin-conjugating enzyme E2-24 kDa.